The primary structure comprises 1372 residues: uncharacterized protein (1372 aa).

The interval 1 to 67 (MEATDQEVML…PPAPSKNPMQ (67 aa)) is disordered. Positions 17–28 (MSTSATSSTNGG) are enriched in polar residues. Residues 75-143 (NLYQTAQEQL…LEEHDRLRRK (69 aa)) are a coiled coil. Disordered regions lie at residues 178 to 199 (NDLS…LSGD), 238 to 287 (HINR…QASS), 380 to 414 (EVSN…EVRR), 427 to 447 (QSLE…VPVP), and 486 to 531 (EERM…DSGI). Composition is skewed to low complexity over residues 184–198 (GIGT…SLSG) and 238–251 (HINR…HGNG). Polar residues-rich tracts occupy residues 257–287 (TGPS…QASS) and 399–408 (TNGNSATTAP). Residues 409 to 438 (KSEVRRLSGDISSIRDRMQSLEQQRKAFSS) adopt a coiled-coil conformation. Basic and acidic residues predominate over residues 486 to 499 (EERMRQQQQKEKHS). Residues 514–523 (ALIIEEPPVA) show a composition bias toward low complexity. Residues 539-580 (LQQQQQLNAAIAALALEERQLEEAANAVNQIEAEFDELTDLH) adopt a coiled-coil conformation. Residues 652-673 (VSKSGPTPNPTSTPNMVSSSPN) show a composition bias toward low complexity. Disordered regions lie at residues 652 to 679 (VSKS…LRRK), 799 to 820 (SRQL…RSEH), 860 to 897 (SQSD…PKRV), 1151 to 1181 (SSQM…PIPK), and 1231 to 1250 (SPPS…SPTK). 2 stretches are compositionally biased toward polar residues: residues 860 to 871 (SQSDSKSLTSPI) and 1151 to 1160 (SSQMMKTSLP).

This is an uncharacterized protein from Drosophila melanogaster (Fruit fly).